A 417-amino-acid polypeptide reads, in one-letter code: Serine--tRNA ligase (417 aa).

226 to 228 (TSE) contributes to the L-serine binding site. ATP is bound by residues 257–259 (RRE) and Val-273. Glu-280 provides a ligand contact to L-serine. Position 344–347 (344–347 (EVTS)) interacts with ATP. Residue Thr-379 coordinates L-serine.

It belongs to the class-II aminoacyl-tRNA synthetase family. Type-1 seryl-tRNA synthetase subfamily. Homodimer. The tRNA molecule binds across the dimer.

The protein resides in the cytoplasm. It catalyses the reaction tRNA(Ser) + L-serine + ATP = L-seryl-tRNA(Ser) + AMP + diphosphate + H(+). The catalysed reaction is tRNA(Sec) + L-serine + ATP = L-seryl-tRNA(Sec) + AMP + diphosphate + H(+). It participates in aminoacyl-tRNA biosynthesis; selenocysteinyl-tRNA(Sec) biosynthesis; L-seryl-tRNA(Sec) from L-serine and tRNA(Sec): step 1/1. Catalyzes the attachment of serine to tRNA(Ser). Is also able to aminoacylate tRNA(Sec) with serine, to form the misacylated tRNA L-seryl-tRNA(Sec), which will be further converted into selenocysteinyl-tRNA(Sec). The sequence is that of Serine--tRNA ligase from Tropheryma whipplei (strain TW08/27) (Whipple's bacillus).